The sequence spans 464 residues: Chaperone SurA (464 aa).

A signal peptide spans Met-1–Ala-25. PpiC domains are found at residues Gly-175 to Glu-277 and Ala-292 to Gly-391. Residues Pro-439–His-464 form a disordered region.

It is found in the periplasm. The enzyme catalyses [protein]-peptidylproline (omega=180) = [protein]-peptidylproline (omega=0). Its function is as follows. Chaperone involved in the correct folding and assembly of outer membrane proteins. Recognizes specific patterns of aromatic residues and the orientation of their side chains, which are found more frequently in integral outer membrane proteins. May act in both early periplasmic and late outer membrane-associated steps of protein maturation. This Xylella fastidiosa (strain 9a5c) protein is Chaperone SurA.